The following is a 555-amino-acid chain: CTP synthase (555 aa).

The segment at 1 to 267 is amidoligase domain; the sequence is MPKFVFVTGG…CKEVLEFLDL (267 aa). Ser-13 lines the CTP pocket. Residue Ser-13 participates in UTP binding. Residues 14 to 19 and Asp-71 contribute to the ATP site; that span reads SIGKGI. Mg(2+) contacts are provided by Asp-71 and Glu-141. CTP contacts are provided by residues 148-150, 188-193, and Lys-224; these read DIE and KTKPTQ. UTP-binding positions include 188 to 193 and Lys-224; that span reads KTKPTQ. In terms of domain architecture, Glutamine amidotransferase type-1 spans 292 to 534; it reads KVAVVGKYVQ…IAAAQSRLPR (243 aa). Gly-354 serves as a coordination point for L-glutamine. Residue Cys-381 is the Nucleophile; for glutamine hydrolysis of the active site. L-glutamine contacts are provided by residues 382-385, Glu-405, and Arg-462; that span reads LGMQ. Active-site residues include His-507 and Glu-509. Residues 532–555 are disordered; the sequence is LPRSPQEALKQTQINSPNQSKNNP. Polar residues predominate over residues 540 to 555; that stretch reads LKQTQINSPNQSKNNP.

This sequence belongs to the CTP synthase family. In terms of assembly, homotetramer.

It catalyses the reaction UTP + L-glutamine + ATP + H2O = CTP + L-glutamate + ADP + phosphate + 2 H(+). The enzyme catalyses L-glutamine + H2O = L-glutamate + NH4(+). It carries out the reaction UTP + NH4(+) + ATP = CTP + ADP + phosphate + 2 H(+). The protein operates within pyrimidine metabolism; CTP biosynthesis via de novo pathway; CTP from UDP: step 2/2. With respect to regulation, allosterically activated by GTP, when glutamine is the substrate; GTP has no effect on the reaction when ammonia is the substrate. The allosteric effector GTP functions by stabilizing the protein conformation that binds the tetrahedral intermediate(s) formed during glutamine hydrolysis. Inhibited by the product CTP, via allosteric rather than competitive inhibition. Catalyzes the ATP-dependent amination of UTP to CTP with either L-glutamine or ammonia as the source of nitrogen. Regulates intracellular CTP levels through interactions with the four ribonucleotide triphosphates. The chain is CTP synthase from Prochlorococcus marinus (strain MIT 9211).